The following is a 310-amino-acid chain: Protein-L-isoaspartate O-methyltransferase (310 aa).

Disordered stretches follow at residues 1-42 (MSGE…AADK) and 64-90 (SAAA…APSV). The span at 14–32 (EDLKRAPRKSEGRAGERHA) shows a compositional bias: basic and acidic residues. Residues 64–81 (SAAAKPATAPKPTALKPA) are compositionally biased toward low complexity. Ser-157 is a catalytic residue.

This sequence belongs to the methyltransferase superfamily. L-isoaspartyl/D-aspartyl protein methyltransferase family.

It is found in the cytoplasm. It carries out the reaction [protein]-L-isoaspartate + S-adenosyl-L-methionine = [protein]-L-isoaspartate alpha-methyl ester + S-adenosyl-L-homocysteine. Its function is as follows. Catalyzes the methyl esterification of L-isoaspartyl residues in peptides and proteins that result from spontaneous decomposition of normal L-aspartyl and L-asparaginyl residues. It plays a role in the repair and/or degradation of damaged proteins. The sequence is that of Protein-L-isoaspartate O-methyltransferase from Burkholderia lata (strain ATCC 17760 / DSM 23089 / LMG 22485 / NCIMB 9086 / R18194 / 383).